The sequence spans 598 residues: Vanadium-dependent bromoperoxidase (598 aa).

Residues Phe-361, Gln-363, Asp-365, Asp-368, and Gln-370 each coordinate Ca(2+). Vanadate contacts are provided by Lys-400 and Arg-408. His-480 is a catalytic residue. The vanadate site is built by Ser-485, Gly-486, His-487, Arg-547, and His-553. His-487 is a catalytic residue.

It belongs to the vanadium-dependent haloperoxidase family. In terms of assembly, homododecamer. It depends on Ca(2+) as a cofactor. The cofactor is vanadate.

It catalyses the reaction RH + Br(-) + H2O2 = RBr + 2 H2O.. Functionally, catalyzes the halogenation of organic substrates in the presence of hydrogen peroxide. This Corallina officinalis (Coral seaweed) protein is Vanadium-dependent bromoperoxidase.